The sequence spans 1589 residues: MAAPTTIKILGRDSIVADFGIWKRHVADDLLTNCSSSTYILISDTTLTPLYVPSFQAAFENAASGLTPKPRLLTYAIPPGELSKSRQTKADIEDWMLSRQPPCGRDTVIIALGGGVIGDLIGYVAATYMRGVRFVQVPTTLLAMVDSSIGGKTAIDTPHGKNLIGAIWQPQKIYLDMEFLNTLPEREFINGMAEVIKTAAISSEEDFAALEKNADAILSAVKSENTPERPRFGGIQEILKLTILASARFKADVVSKDEREGGLRNLLNFGHSIGHAIEGILAPQILHGECVAIGMVKEAELARHLGLLKNVAVPRLVKCLASYGLPTSLKDSRIRRLSAGKHCSVDQLLAFMAVDKKNAGPKKKVVLLSAIGRTHEQQASVVSNEDIKIVLAPSIEVSPGVPKSLQVTCTPPGSKSISNRALVLAALGSGTCRIKNLLHSDDTEVMLNALERLGAATFSWEEEGEVLVVHGNGGTLKASPEELYLGNAGTASRFLTTVATLANNGTVSSTVLTGNARMKQRPIGALVDSLRANGAGVEYLETNGCLPLKIDASGGFAGGEISLAAKISSQYVSSLLMCAPYAKEPVTLKLVGGKPISQQYIDMTTAMMRSFGIDVKRSTTEEHTYHIPQGKYVNPAEYIIESDASSATYPLAVAAITGTTCTIPNIGSKSLQGDARFAVDVLRPMGCEVSQSEYSTTVTAPKDGVLKPLPNVDMEPMTDAFLTASVLAAVATGSPNRTTRIFGIANQRVKECNRIRAMKDELAKFGVICREHDDGLEIDGIDRSTLLQPPHGVHCYDDHRVAMSFSVLSLTAPKPTLILEKECVGKTWPGWWDTLAQLFKAKLEGVELKSSTKQKAEKPAASIFIIGMRGAGKTTSGLWAAKALKRPFIDLDVELESTIGKTIPEIIKERGWEGFREAELALLQKVIREKPTGYVFACGGGIVETQEGRDLLVQYHKANGNVLLLMRDIKEVMDFLKIDKTRPAYVEDMMGVWLRRKPWYQQCSNFQFYSQQSTQDEMGRALESFSRFLRVITGEVDHLSLLKKKPQSFFVSLTLPDLRPSAEILGDVTLGSDAVELRVDLLVDPSSANDIPSVDYVAEQISMLRSRVSLPLVFTIRTKSQGGRFPDDAHDAALDLYRLAVRMGSEFVDLEVTFPEHILRAVTEMKGFSKIIASHHDVSGSLSWANGSWGQFYNKALQYGDIIKLVGVAKCLDDNIALRKFKTWAQDAHEIPVIAINMGEKGRLSRILNGFMTPVSHPKLPFKAAPGQLSAQDIRKGLSLMGEIEPRKFAIFGKPVSASRSPAMHNALFAQVGLPHAYSRLETDNVEDVREFIHAPDFGGASVTIPLKLDIMPLLDEISPEAQVIGAVNTIVPIPRGPGDMTGYPRLIGYNTDWQGMVRCLRHGKAISPSFADTAVPGLVIGGGGTARAAIHALYSMSYSPIYLIGRSEAKVAEMASTFPEKYSVQVLKDATSLENLPMVAIGTIPGDRPIDPSMREVLCRLFENAARVDSELSAKGEVPAKRVLLEMAYKPDITPLSQLASDSGWSTIPGLEALVGQGVHQFELWTGITPVYQDARAAVMNPGTDNRG.

The tract at residues 1-384 is 3-dehydroquinate synthase; sequence MAAPTTIKIL…HEQQASVVSN (384 aa). NAD(+) is bound by residues 44–46, 81–84, 114–116, and D119; these read DTT, ELSK, and GGV. R130 is a binding site for 7-phospho-2-dehydro-3-deoxy-D-arabino-heptonate. An NAD(+)-binding site is contributed by 139–140; that stretch reads TT. Positions 146 and 152 each coordinate 7-phospho-2-dehydro-3-deoxy-D-arabino-heptonate. K161 is a binding site for NAD(+). N162 is a 7-phospho-2-dehydro-3-deoxy-D-arabino-heptonate binding site. NAD(+) is bound by residues 179–182 and N190; that span reads FLNT. E194 provides a ligand contact to Zn(2+). Residues 194–197 and K250 each bind 7-phospho-2-dehydro-3-deoxy-D-arabino-heptonate; that span reads EVIK. E260 serves as the catalytic Proton acceptor; for 3-dehydroquinate synthase activity. Residues 264-268 and H271 each bind 7-phospho-2-dehydro-3-deoxy-D-arabino-heptonate; that span reads RNLLN. H271 contributes to the Zn(2+) binding site. H275 (proton acceptor; for 3-dehydroquinate synthase activity) is an active-site residue. H287 and K356 together coordinate 7-phospho-2-dehydro-3-deoxy-D-arabino-heptonate. H287 serves as a coordination point for Zn(2+). The EPSP synthase stretch occupies residues 397-841; sequence VSPGVPKSLQ…WDTLAQLFKA (445 aa). C823 functions as the For EPSP synthase activity in the catalytic mechanism. Residues 861–1052 are shikimate kinase; that stretch reads ASIFIIGMRG…KKKPQSFFVS (192 aa). 867–874 contributes to the ATP binding site; the sequence is GMRGAGKT. Residues 1053–1273 form a 3-dehydroquinase region; that stretch reads LTLPDLRPSA…AAPGQLSAQD (221 aa). Catalysis depends on H1176, which acts as the Proton acceptor; for 3-dehydroquinate dehydratase activity. The active-site Schiff-base intermediate with substrate; for 3-dehydroquinate dehydratase activity is the K1204. The tract at residues 1286–1589 is shikimate dehydrogenase; it reads PRKFAIFGKP…VMNPGTDNRG (304 aa).

In the N-terminal section; belongs to the sugar phosphate cyclases superfamily. Dehydroquinate synthase family. It in the 2nd section; belongs to the EPSP synthase family. This sequence in the 3rd section; belongs to the shikimate kinase family. The protein in the 4th section; belongs to the type-I 3-dehydroquinase family. In the C-terminal section; belongs to the shikimate dehydrogenase family. In terms of assembly, homodimer. Zn(2+) serves as cofactor.

The protein localises to the cytoplasm. It catalyses the reaction 7-phospho-2-dehydro-3-deoxy-D-arabino-heptonate = 3-dehydroquinate + phosphate. The enzyme catalyses 3-dehydroquinate = 3-dehydroshikimate + H2O. It carries out the reaction shikimate + NADP(+) = 3-dehydroshikimate + NADPH + H(+). The catalysed reaction is shikimate + ATP = 3-phosphoshikimate + ADP + H(+). It catalyses the reaction 3-phosphoshikimate + phosphoenolpyruvate = 5-O-(1-carboxyvinyl)-3-phosphoshikimate + phosphate. It participates in metabolic intermediate biosynthesis; chorismate biosynthesis; chorismate from D-erythrose 4-phosphate and phosphoenolpyruvate: step 2/7. Its pathway is metabolic intermediate biosynthesis; chorismate biosynthesis; chorismate from D-erythrose 4-phosphate and phosphoenolpyruvate: step 3/7. The protein operates within metabolic intermediate biosynthesis; chorismate biosynthesis; chorismate from D-erythrose 4-phosphate and phosphoenolpyruvate: step 4/7. It functions in the pathway metabolic intermediate biosynthesis; chorismate biosynthesis; chorismate from D-erythrose 4-phosphate and phosphoenolpyruvate: step 5/7. It participates in metabolic intermediate biosynthesis; chorismate biosynthesis; chorismate from D-erythrose 4-phosphate and phosphoenolpyruvate: step 6/7. Functionally, the AROM polypeptide catalyzes 5 consecutive enzymatic reactions in prechorismate polyaromatic amino acid biosynthesis. In Coccidioides posadasii (strain C735) (Valley fever fungus), this protein is Pentafunctional AROM polypeptide.